The following is a 173-amino-acid chain: Bifunctional protein PyrR (173 aa).

The short motif at 93-105 is the PRPP-binding element; sequence VILVDDVLYTGRT.

Belongs to the purine/pyrimidine phosphoribosyltransferase family. PyrR subfamily. As to quaternary structure, homodimer and homohexamer; in equilibrium.

It catalyses the reaction UMP + diphosphate = 5-phospho-alpha-D-ribose 1-diphosphate + uracil. Its function is as follows. Regulates transcriptional attenuation of the pyrimidine nucleotide (pyr) operon by binding in a uridine-dependent manner to specific sites on pyr mRNA. This disrupts an antiterminator hairpin in the RNA and favors formation of a downstream transcription terminator, leading to a reduced expression of downstream genes. Also displays a weak uracil phosphoribosyltransferase activity which is not physiologically significant. The polypeptide is Bifunctional protein PyrR (Streptococcus uberis (strain ATCC BAA-854 / 0140J)).